The following is a 155-amino-acid chain: Microsomal glutathione S-transferase 1 (155 aa).

Residues 3–9 (DLTELMK) are Lumenal-facing. The helical transmembrane segment at 10 to 33 (NEVFMAFASYATIVLSKMMFMSTA) threads the bilayer. The Cytoplasmic segment spans residues 34–62 (TAFYRLTRKVFANPEDCSSFGKGENAKKY). Arg-38 contacts glutathione. An N6-acetyllysine mark is found at Lys-42, Lys-55, and Lys-60. The chain crosses the membrane as a helical span at residues 63–96 (LRTDERVERVRRAHLNDLENIVPFLGIGLLYSLS). Residues Arg-73, Arg-74, His-76, and Glu-81 each coordinate glutathione. Over 97 to 99 (GPD) the chain is Lumenal. A helical transmembrane segment spans residues 100-123 (LSTAILHFRLFVGARIYHTIAYLT). Tyr-121 provides a ligand contact to glutathione. Topologically, residues 124–128 (PLPQP) are cytoplasmic. Residues 129-148 (NRGLAFFLGYGVTLSMAYRL) form a helical membrane-spanning segment. Topologically, residues 149 to 155 (LKSRLYL) are lumenal.

It belongs to the MAPEG family. In terms of assembly, homotrimer; The trimer binds only one molecule of glutathione.

It localises to the endoplasmic reticulum membrane. The protein resides in the mitochondrion outer membrane. The enzyme catalyses RX + glutathione = an S-substituted glutathione + a halide anion + H(+). In terms of biological role, conjugation of reduced glutathione to a wide number of exogenous and endogenous hydrophobic electrophiles. This is Microsomal glutathione S-transferase 1 (MGST1) from Sus scrofa (Pig).